Reading from the N-terminus, the 196-residue chain is Large ribosomal subunit protein uL18 (196 aa).

Belongs to the universal ribosomal protein uL18 family. As to quaternary structure, part of the 50S ribosomal subunit. Contacts the 5S and 23S rRNAs.

Its function is as follows. This is one of the proteins that bind and probably mediate the attachment of the 5S RNA into the large ribosomal subunit, where it forms part of the central protuberance. This Desulfurococcus amylolyticus (strain DSM 18924 / JCM 16383 / VKM B-2413 / 1221n) (Desulfurococcus kamchatkensis) protein is Large ribosomal subunit protein uL18.